The following is a 464-amino-acid chain: tRNA-2-methylthio-N(6)-dimethylallyladenosine synthase (464 aa).

The segment at Met1–Pro25 is disordered. The MTTase N-terminal domain occupies Arg27–Gly142. 6 residues coordinate [4Fe-4S] cluster: Cys36, Cys72, Cys105, Cys180, Cys184, and Cys187. The 233-residue stretch at Ala166 to Glu398 folds into the Radical SAM core domain. A TRAM domain is found at Ala401–Ala464.

This sequence belongs to the methylthiotransferase family. MiaB subfamily. As to quaternary structure, monomer. It depends on [4Fe-4S] cluster as a cofactor.

It localises to the cytoplasm. The catalysed reaction is N(6)-dimethylallyladenosine(37) in tRNA + (sulfur carrier)-SH + AH2 + 2 S-adenosyl-L-methionine = 2-methylsulfanyl-N(6)-dimethylallyladenosine(37) in tRNA + (sulfur carrier)-H + 5'-deoxyadenosine + L-methionine + A + S-adenosyl-L-homocysteine + 2 H(+). In terms of biological role, catalyzes the methylthiolation of N6-(dimethylallyl)adenosine (i(6)A), leading to the formation of 2-methylthio-N6-(dimethylallyl)adenosine (ms(2)i(6)A) at position 37 in tRNAs that read codons beginning with uridine. The chain is tRNA-2-methylthio-N(6)-dimethylallyladenosine synthase from Anaeromyxobacter dehalogenans (strain 2CP-C).